The sequence spans 372 residues: Protein L-Myc-1a (372 aa).

Disordered regions lie at residues 172–226 (KVAA…ADPF) and 243–306 (NYAA…DDLR). The segment covering 187–197 (SDDDEDDDEID) has biased composition (acidic residues). A compositionally biased stretch (low complexity) spans 269–284 (ESSSAPSSPLSSPATS). One can recognise a bHLH domain in the interval 289-341 (STEQRRNFLERKRRDDLRSRFQALREEIPGLSGSSKTSKVAILTQATDYLLQL). Residues 290-306 (TEQRRNFLERKRRDDLR) are compositionally biased toward basic and acidic residues. Residues 341–369 (LHSSQRRQAQEKRKLKAKQQQLLRRISAL) are leucine-zipper.

Efficient DNA binding requires dimerization with another bHLH protein. Binds DNA as a heterodimer with max. As to expression, uterus.

The protein localises to the nucleus. The chain is Protein L-Myc-1a from Danio rerio (Zebrafish).